We begin with the raw amino-acid sequence, 130 residues long: DNA-directed RNA polymerase subunit omega (130 aa).

Disordered regions lie at residues 79-98 and 108-130; these read EPES…VDAD and TEEE…EEDE.

This sequence belongs to the RNA polymerase subunit omega family. In terms of assembly, the RNAP catalytic core consists of 2 alpha, 1 beta, 1 beta' and 1 omega subunit. When a sigma factor is associated with the core the holoenzyme is formed, which can initiate transcription.

It carries out the reaction RNA(n) + a ribonucleoside 5'-triphosphate = RNA(n+1) + diphosphate. Promotes RNA polymerase assembly. Latches the N- and C-terminal regions of the beta' subunit thereby facilitating its interaction with the beta and alpha subunits. The chain is DNA-directed RNA polymerase subunit omega from Nitrobacter winogradskyi (strain ATCC 25391 / DSM 10237 / CIP 104748 / NCIMB 11846 / Nb-255).